The chain runs to 261 residues: Thiamine thiazole synthase (261 aa).

NAD(+)-binding positions include Ala-33, 52–53 (ER), Gly-60, Val-124, and 152–154 (HVD). Residues Asp-154 and His-169 each coordinate Fe cation. Ile-219 contributes to the NAD(+) binding site. Arg-229 contacts glycine.

The protein belongs to the THI4 family. In terms of assembly, homooctamer; tetramer of dimers. Fe(2+) serves as cofactor.

It catalyses the reaction hydrogen sulfide + glycine + NAD(+) = ADP-5-ethyl-4-methylthiazole-2-carboxylate + nicotinamide + 3 H2O + H(+). Its pathway is cofactor biosynthesis; thiamine diphosphate biosynthesis. Involved in the biosynthesis of the thiazole moiety of thiamine. Catalyzes the conversion of NAD and glycine to adenosine diphosphate 5-(2-hydroxyethyl)-4-methylthiazole-2-carboxylate (ADT), an adenylated thiazole intermediate, using free sulfide as a source of sulfur. The sequence is that of Thiamine thiazole synthase from Pyrobaculum aerophilum (strain ATCC 51768 / DSM 7523 / JCM 9630 / CIP 104966 / NBRC 100827 / IM2).